The sequence spans 445 residues: DDB1- and CUL4-associated factor 13 (445 aa).

Lysine 49 bears the N6-acetyllysine mark. 7 WD repeats span residues 64–104 (GHRD…CIRT), 107–146 (AHEG…YGDE), 149–191 (PLHT…PICS), 194–234 (WGFD…PLKK), 236–276 (ILDM…TPVM), 280–319 (DHVS…SREV), and 323–362 (KRMQ…KLGV). Positions 353–441 (KANASEKLGV…LVSEKKKHVV (89 aa)) are required for nucleolar location.

This sequence belongs to the WD repeat DCAF13/WDSOF1 family. As to quaternary structure, part of the small subunit (SSU) processome, composed of more than 70 proteins and the RNA chaperone small nucleolar RNA (snoRNA) U3. Component of the DCX(DCAF13) E3 ubiquitin ligase complex, at least composed of CUL4 (CUL4A or CUL4B), DDB1, DCAF13 and RBX1. Interacts (via WD40 domain) with DDB1. Interacts with ESR1 and LATS1. Expressed in the endometrium during decidualization. Expression is down-regulated in preeclampsia decidual tissues.

The protein localises to the nucleus. Its subcellular location is the nucleolus. It participates in protein modification; protein ubiquitination. Its function is as follows. Part of the small subunit (SSU) processome, first precursor of the small eukaryotic ribosomal subunit. During the assembly of the SSU processome in the nucleolus, many ribosome biogenesis factors, an RNA chaperone and ribosomal proteins associate with the nascent pre-rRNA and work in concert to generate RNA folding, modifications, rearrangements and cleavage as well as targeted degradation of pre-ribosomal RNA by the RNA exosome. Participates in the 18S rRNA processing in growing oocytes, being essential for oocyte nonsurrounded nucleolus (NSN) to surrounded nucleolus (SN) transition. Functionally, substrate-recognition component of a DCX (DDB1-CUL4-X-box) E3 ubiquitin-protein ligase complex that plays a key role in embryo preimplantation and is required for normal meiotic cycle progression in oocytes. Acts as a maternal factor that regulates oocyte and zygotic chromatin tightness during maternal to zygotic transition. Also involved in the transformation of the endometrium into the decidua, known as decidualization, providing a solid foundation for implantation of blastocysts. Recognizes the histone methyltransferases SUV39H1 and SUV39H2 and directs them to polyubiquitination and proteasomal degradation, which facilitates the H3K9me3 removal and early zygotic gene expression, essential steps for progressive genome reprogramming and the establishment of pluripotency during preimplantation embryonic development. Supports the spindle assembly and chromosome condensation during oocyte meiotic division by targeting the polyubiquitination and degradation of PTEN, a lipid phosphatase that inhibits PI3K pathway as well as oocyte growth and maturation. Targets PMP22 for polyubiquitination and proteasomal degradation. The sequence is that of DDB1- and CUL4-associated factor 13 from Homo sapiens (Human).